A 516-amino-acid chain; its full sequence is Probable cytochrome P450 9f2 (516 aa).

Residue Cys-460 participates in heme binding.

This sequence belongs to the cytochrome P450 family. The cofactor is heme.

Its subcellular location is the endoplasmic reticulum membrane. It localises to the microsome membrane. May be involved in the metabolism of insect hormones and in the breakdown of synthetic insecticides. This is Probable cytochrome P450 9f2 (Cyp9f2) from Drosophila melanogaster (Fruit fly).